A 204-amino-acid chain; its full sequence is Large ribosomal subunit protein bL25 (204 aa).

Residues 1 to 23 (MSETLHLSAETRDRAGKGASRAL) form a disordered region.

It belongs to the bacterial ribosomal protein bL25 family. CTC subfamily. Part of the 50S ribosomal subunit; part of the 5S rRNA/L5/L18/L25 subcomplex. Contacts the 5S rRNA. Binds to the 5S rRNA independently of L5 and L18.

Functionally, this is one of the proteins that binds to the 5S RNA in the ribosome where it forms part of the central protuberance. This chain is Large ribosomal subunit protein bL25, found in Novosphingobium aromaticivorans (strain ATCC 700278 / DSM 12444 / CCUG 56034 / CIP 105152 / NBRC 16084 / F199).